Consider the following 81-residue polypeptide: Sulfur carrier protein TusA (81 aa).

The active-site Cysteine persulfide intermediate is Cys19.

The protein belongs to the sulfur carrier protein TusA family.

The protein localises to the cytoplasm. In terms of biological role, sulfur carrier protein which probably makes part of a sulfur-relay system. This is Sulfur carrier protein TusA from Shewanella piezotolerans (strain WP3 / JCM 13877).